Reading from the N-terminus, the 418-residue chain is UDP-N-acetylglucosamine 1-carboxyvinyltransferase 2 (418 aa).

22 to 23 is a binding site for phosphoenolpyruvate; the sequence is KN. UDP-N-acetyl-alpha-D-glucosamine is bound at residue Arg93. The Proton donor role is filled by Cys117. Cys117 is subject to 2-(S-cysteinyl)pyruvic acid O-phosphothioketal. UDP-N-acetyl-alpha-D-glucosamine-binding positions include 122-126, Asp305, and Ile327; that span reads RPIDQ.

Belongs to the EPSP synthase family. MurA subfamily.

The protein resides in the cytoplasm. The catalysed reaction is phosphoenolpyruvate + UDP-N-acetyl-alpha-D-glucosamine = UDP-N-acetyl-3-O-(1-carboxyvinyl)-alpha-D-glucosamine + phosphate. It participates in cell wall biogenesis; peptidoglycan biosynthesis. In terms of biological role, cell wall formation. Adds enolpyruvyl to UDP-N-acetylglucosamine. In Clostridium acetobutylicum (strain ATCC 824 / DSM 792 / JCM 1419 / IAM 19013 / LMG 5710 / NBRC 13948 / NRRL B-527 / VKM B-1787 / 2291 / W), this protein is UDP-N-acetylglucosamine 1-carboxyvinyltransferase 2.